The chain runs to 132 residues: Subtelomeric hrmA-associated cluster protein AFUB_079000 (132 aa).

Its function is as follows. Part of the subtelomeric hrmA-associated cluster (HAC) containing genes that alter the hyphal surface (such as reduced total chitin or increased beta-glucan exposure) and perturb inter-hyphal interactions within the developing biofilms, resulting in a loss of vertically aligned polarized growing filaments. Consequently, this hypoxia-typic morphotype (called H-MORPH) with altered biofilm architecture leads to increased hypoxia fitness, increased host inflammation, rapid disease progression, and mortality in a murine model of invasive aspergillosis. This Aspergillus fumigatus (strain CBS 144.89 / FGSC A1163 / CEA10) (Neosartorya fumigata) protein is Subtelomeric hrmA-associated cluster protein AFUB_079000.